We begin with the raw amino-acid sequence, 318 residues long: tRNA-cytidine(32) 2-sulfurtransferase (318 aa).

The segment at 1–29 is disordered; the sequence is MNHVSSTKPDTAPSKHLTSSHIDATDQNN. The span at 16-27 shows a compositional bias: polar residues; it reads HLTSSHIDATDQ. Positions 64 to 69 match the PP-loop motif motif; the sequence is SGGKDS. [4Fe-4S] cluster contacts are provided by C139, C142, and C230.

It belongs to the TtcA family. As to quaternary structure, homodimer. Requires Mg(2+) as cofactor. [4Fe-4S] cluster is required as a cofactor.

It is found in the cytoplasm. It carries out the reaction cytidine(32) in tRNA + S-sulfanyl-L-cysteinyl-[cysteine desulfurase] + AH2 + ATP = 2-thiocytidine(32) in tRNA + L-cysteinyl-[cysteine desulfurase] + A + AMP + diphosphate + H(+). It participates in tRNA modification. In terms of biological role, catalyzes the ATP-dependent 2-thiolation of cytidine in position 32 of tRNA, to form 2-thiocytidine (s(2)C32). The sulfur atoms are provided by the cysteine/cysteine desulfurase (IscS) system. The sequence is that of tRNA-cytidine(32) 2-sulfurtransferase from Pseudoalteromonas atlantica (strain T6c / ATCC BAA-1087).